Consider the following 529-residue polypeptide: Inosine-5'-monophosphate dehydrogenase (529 aa).

CBS domains follow at residues 129–185 (MVTD…SKQV) and 189–246 (MTKA…PLAT). NAD(+) is bound by residues D283 and 334 to 336 (GVG). Residues G336 and G338 each coordinate K(+). Residue S339 participates in IMP binding. Position 341 (C341) interacts with K(+). The Thioimidate intermediate role is filled by C341. IMP-binding positions include 374-376 (DGG), 397-398 (GS), and 421-425 (YRGMG). The active-site Proton acceptor is R443. E458 contacts IMP. The K(+) site is built by E511, S512, and H513.

Belongs to the IMPDH/GMPR family. Homotetramer. K(+) serves as cofactor.

It catalyses the reaction IMP + NAD(+) + H2O = XMP + NADH + H(+). It functions in the pathway purine metabolism; XMP biosynthesis via de novo pathway; XMP from IMP: step 1/1. Its activity is regulated as follows. Mycophenolic acid (MPA) is a non-competitive inhibitor that prevents formation of the closed enzyme conformation by binding to the same site as the amobile flap. In contrast, mizoribine monophosphate (MZP) is a competitive inhibitor that induces the closed conformation. MPA is a potent inhibitor of mammalian IMPDHs but a poor inhibitor of the bacterial enzymes. MZP is a more potent inhibitor of bacterial IMPDH. In terms of biological role, catalyzes the conversion of inosine 5'-phosphate (IMP) to xanthosine 5'-phosphate (XMP), the first committed and rate-limiting step in the de novo synthesis of guanine nucleotides, and therefore plays an important role in the regulation of cell growth. The polypeptide is Inosine-5'-monophosphate dehydrogenase (Mycobacterium bovis (strain ATCC BAA-935 / AF2122/97)).